The chain runs to 308 residues: 1D-myo-inositol 2-acetamido-2-deoxy-alpha-D-glucopyranoside deacetylase (308 aa).

Positions 37, 40, and 171 each coordinate Zn(2+).

The protein belongs to the MshB deacetylase family. Zn(2+) is required as a cofactor.

The catalysed reaction is 1D-myo-inositol 2-acetamido-2-deoxy-alpha-D-glucopyranoside + H2O = 1D-myo-inositol 2-amino-2-deoxy-alpha-D-glucopyranoside + acetate. In terms of biological role, catalyzes the deacetylation of 1D-myo-inositol 2-acetamido-2-deoxy-alpha-D-glucopyranoside (GlcNAc-Ins) in the mycothiol biosynthesis pathway. This is 1D-myo-inositol 2-acetamido-2-deoxy-alpha-D-glucopyranoside deacetylase from Mycobacterium sp. (strain KMS).